Here is a 191-residue protein sequence, read N- to C-terminus: Probable DNA-directed RNA polymerase subunit delta (191 aa).

Residues 14–83 (LSMIEVARAI…GDNKWGLRSW (70 aa)) form the HTH HARE-type domain. Acidic residues-rich tracts occupy residues 119 to 133 (EDAIDYNDDDPEDEN) and 143 to 191 (YDND…ETND). Positions 119 to 191 (EDAIDYNDDD…DDDYEDETND (73 aa)) are disordered.

Belongs to the RpoE family. RNAP is composed of a core of 2 alpha, a beta and a beta' subunits. The core is associated with a delta subunit and one of several sigma factors.

Participates in both the initiation and recycling phases of transcription. In the presence of the delta subunit, RNAP displays an increased specificity of transcription, a decreased affinity for nucleic acids, and an increased efficiency of RNA synthesis because of enhanced recycling. This Streptococcus thermophilus (strain ATCC BAA-491 / LMD-9) protein is Probable DNA-directed RNA polymerase subunit delta.